The sequence spans 357 residues: Serpentine receptor class epsilon-31 (357 aa).

Helical transmembrane passes span 28–48 (VISI…NLSI), 61–81 (LMFL…GKFI), 121–141 (LLIF…FGIL), 165–185 (IPIF…FIVI), 192–212 (IIAR…WLFV), 253–273 (LVAV…SLTF), and 283–303 (FVEN…MFSI).

This sequence belongs to the nematode receptor-like protein sre family.

It localises to the membrane. This is Serpentine receptor class epsilon-31 (sre-31) from Caenorhabditis elegans.